The sequence spans 400 residues: CCA-adding enzyme (400 aa).

ATP is bound by residues Gly-28 and Arg-31. 2 residues coordinate CTP: Gly-28 and Arg-31. Mg(2+) contacts are provided by Asp-41 and Asp-43. ATP contacts are provided by Arg-112, Asp-155, Arg-158, Arg-161, and Arg-164. Positions 112, 155, 158, 161, and 164 each coordinate CTP.

Belongs to the tRNA nucleotidyltransferase/poly(A) polymerase family. Bacterial CCA-adding enzyme type 3 subfamily. As to quaternary structure, homodimer. Mg(2+) serves as cofactor.

It carries out the reaction a tRNA precursor + 2 CTP + ATP = a tRNA with a 3' CCA end + 3 diphosphate. It catalyses the reaction a tRNA with a 3' CCA end + 2 CTP + ATP = a tRNA with a 3' CCACCA end + 3 diphosphate. In terms of biological role, catalyzes the addition and repair of the essential 3'-terminal CCA sequence in tRNAs without using a nucleic acid template. Adds these three nucleotides in the order of C, C, and A to the tRNA nucleotide-73, using CTP and ATP as substrates and producing inorganic pyrophosphate. tRNA 3'-terminal CCA addition is required both for tRNA processing and repair. Also involved in tRNA surveillance by mediating tandem CCA addition to generate a CCACCA at the 3' terminus of unstable tRNAs. While stable tRNAs receive only 3'-terminal CCA, unstable tRNAs are marked with CCACCA and rapidly degraded. The polypeptide is CCA-adding enzyme (Staphylococcus aureus (strain Mu3 / ATCC 700698)).